A 141-amino-acid polypeptide reads, in one-letter code: Acetyltransferase YPN_1354 (141 aa).

The region spanning 1–141 (MEIRIFQQDD…GKRLIVDQEY (141 aa)) is the N-acetyltransferase domain.

Belongs to the acetyltransferase family. YpeA subfamily.

The polypeptide is Acetyltransferase YPN_1354 (Yersinia pestis bv. Antiqua (strain Nepal516)).